The primary structure comprises 462 residues: Fumarate hydratase class II (462 aa).

Substrate is bound by residues 97 to 99 (SGT), 127 to 130 (HPND), 137 to 139 (SSN), and T185. The active-site Proton donor/acceptor is H186. The active site involves S316. Substrate-binding positions include S317 and 322 to 324 (KVN).

This sequence belongs to the class-II fumarase/aspartase family. Fumarase subfamily. As to quaternary structure, homotetramer.

The protein localises to the cytoplasm. It carries out the reaction (S)-malate = fumarate + H2O. It functions in the pathway carbohydrate metabolism; tricarboxylic acid cycle; (S)-malate from fumarate: step 1/1. Its function is as follows. Involved in the TCA cycle. Catalyzes the stereospecific interconversion of fumarate to L-malate. This chain is Fumarate hydratase class II, found in Bacillus cereus (strain ATCC 14579 / DSM 31 / CCUG 7414 / JCM 2152 / NBRC 15305 / NCIMB 9373 / NCTC 2599 / NRRL B-3711).